We begin with the raw amino-acid sequence, 368 residues long: Putative J domain-containing protein R445 (368 aa).

Residues 13–83 (DLYKILGLTN…KQRNEYNQRL (71 aa)) enclose the J domain.

This chain is Putative J domain-containing protein R445, found in Acanthamoeba polyphaga mimivirus (APMV).